A 590-amino-acid chain; its full sequence is Glutamine--tRNA ligase (590 aa).

Residues 55-65 (PEPNGYLHIGH) carry the 'HIGH' region motif. Residues 56–58 (EPN) and 62–68 (HIGHAKS) contribute to the ATP site. L-glutamine-binding residues include Asp93 and Tyr238. ATP-binding positions include Thr257 and 292-293 (RL). A 'KMSKS' region motif is present at residues 299 to 303 (ITSKR).

Belongs to the class-I aminoacyl-tRNA synthetase family. As to quaternary structure, monomer.

It localises to the cytoplasm. It carries out the reaction tRNA(Gln) + L-glutamine + ATP = L-glutaminyl-tRNA(Gln) + AMP + diphosphate. The sequence is that of Glutamine--tRNA ligase from Polynucleobacter asymbioticus (strain DSM 18221 / CIP 109841 / QLW-P1DMWA-1) (Polynucleobacter necessarius subsp. asymbioticus).